A 436-amino-acid chain; its full sequence is Cytochrome P450 monooxygenase phqO (436 aa).

C377 serves as a coordination point for heme.

Belongs to the cytochrome P450 family. Requires heme as cofactor.

It participates in alkaloid biosynthesis. Cytochrome P450 monooxygenase; part of the gene cluster that mediates the biosynthesis of paraherquamide, a fungal indole alkaloid that belongs to a family of natural products containing a characteristic bicyclo[2.2.2]diazaoctane core. The first steps in the biosynthesis of paraherquamide is the production of the beta-methyl-proline precursor from L-isoleucine. They require oxidation of a terminally hydroxylated L-isoleucine to the corresponding aldehyde by enzymes which have still to be identified. Spontaneous cyclization and dehydration would yield the 4-methyl pyrolline-5-carboxylic acid, which is then reduced by the pyrroline-5-carboxylate reductase phqD leading to the beta-methyl-proline precursor. The next step of paraherquamide biosynthesis involves coupling of beta-methyl-proline and L-tryptophan by the bimodular NRPS phqB, to produce a monooxopiperazine intermediate. The reductase (R) domain of phqB utilizes NADPH for hydride transfer to reduce the thioester bond of the T domain-tethered linear dipeptide to a hemithioaminal intermediate, which spontaneously cleaves the C-S bond to release the aldehyde product. This compound undergoes spontaneous cyclization and dehydration to give a dienamine which is reverse prenylated at C-2 by the reverse prenyltransferase phqJ. The other prenyltransferase present in the cluster, phqI may be a redundant gene in the pathway. During biosynthetic assembly, the key step to produce the polycyclic core is catalyzed by the bifunctional reductase and intramolecular [4+2] Diels-Alderase, phqE, resulting in formation of the [2.2.2] diazaoctane intermediate preparaherquamide. Following formation of preparaherquamide, an indole 2,3-epoxidation-initiated pinacol-like rearrangement is catalyzed by the phqK FAD-dependent monooxygenase. The prenyltransferase phqA, the cytochrome P450 monooxygenase phqL, and the FAD-linked oxidoreductase phqH (or the cytochrome P450 monooxygenase phqM), are proposed to be involved in the formation of the pyran ring. The FAD-dependent monooxygenase phqK is likely responsible for generation of the spiro-oxindole, and the N-methylation is likely mediated by the phqN methyltransferase leading to the isolable natural product paraherquamide F. However, the order of these biosynthetic steps has still to be determined. In late-stage paraherquamide biosynthesis, the third P450 monooxygenase, phqO, is probably responsible for the C-14 hydroxylation, transforming paraherquamide F to paraherquamide G, and paraherquamide E to the final product paraherquamide A. The expansion from the 6-membered ring pyran (in paraherquamides F and G) to the 7-membered dioxepin ring (in paraherquamides A and E) represents a poorly understood but intriguing process that probably involves the 2-oxoglutarate-dependent dioxygenase phqC. Finally, the remaining members of the paraherquamide cluster, including phqI as well as phqM (or phqH), do not have a clearly prescribed role and appear to be redundant. This chain is Cytochrome P450 monooxygenase phqO, found in Penicillium fellutanum.